The chain runs to 146 residues: Globin-1 (146 aa).

Residues 9–146 (QLTADVKKDL…KLVAVVQAAL (138 aa)) form the Globin domain. H101 lines the heme b pocket.

Belongs to the globin family. As to quaternary structure, homodimer.

It is found in the cytoplasm. The sequence is that of Globin-1 from Anadara broughtonii (Blood clam).